A 117-amino-acid chain; its full sequence is UPF0342 protein lwe2240 (117 aa).

This sequence belongs to the UPF0342 family.

The chain is UPF0342 protein lwe2240 from Listeria welshimeri serovar 6b (strain ATCC 35897 / DSM 20650 / CCUG 15529 / CIP 8149 / NCTC 11857 / SLCC 5334 / V8).